Here is a 31-residue protein sequence, read N- to C-terminus: Cliotide T17 (31 aa).

The cyclopeptide (Gly-Asn) cross-link spans Gly1 to Asn31. Intrachain disulfides connect Cys5/Cys21, Cys9/Cys23, and Cys14/Cys28.

Post-translationally, contains 3 disulfide bonds. In terms of processing, this is a cyclic peptide. As to expression, expressed in root nodules but not in seed.

Its function is as follows. Probably participates in a plant defense mechanism. This chain is Cliotide T17, found in Clitoria ternatea (Butterfly pea).